Here is a 466-residue protein sequence, read N- to C-terminus: MGKTLFEKVWNAHVVTEVKDGPSILYIDKQLIHEVTSPQAFAGIEKRGIGVFRPERTLATPDHNVPTKGQNLPIVEDLSRFQVDKLTENCNKFGVTLYGLGHASQGVVHVVGPETGTTLPGMTIVCGDSHTSTHGAFGSIAFGIGTSEVEQVLATQCLMQTKAKTLKIEINGKLAKGVTAKDVILYVIAQISAAGGTGYFVEYCGSAITSLSMEARMTICNMSIEMGARGGMIAPDETTFNYIKGREFAPKGAKWDEAVAYWKTLYSDSDAVFDKTLKYDAADIGPMITYGTNPGMGISVNKNIPSLDSIEESNKVTFNKALDYMGFHAGDSLIGKQVNWVFLGSCTNGRIEDLRQFAEFVKGKQKAANINALIVPGSKQVEKQAIAEGIDKVLAEAGFELREPGCSACLAMNEDKVPKGEYCVSTSNRNFEGRQGPGARTLLVSPLTAAAIAVSGKIVDVREMLN.

3 residues coordinate [4Fe-4S] cluster: Cys346, Cys406, and Cys409.

It belongs to the aconitase/IPM isomerase family. LeuC type 1 subfamily. In terms of assembly, heterodimer of LeuC and LeuD. [4Fe-4S] cluster serves as cofactor.

It catalyses the reaction (2R,3S)-3-isopropylmalate = (2S)-2-isopropylmalate. The protein operates within amino-acid biosynthesis; L-leucine biosynthesis; L-leucine from 3-methyl-2-oxobutanoate: step 2/4. Its function is as follows. Catalyzes the isomerization between 2-isopropylmalate and 3-isopropylmalate, via the formation of 2-isopropylmaleate. The sequence is that of 3-isopropylmalate dehydratase large subunit from Cytophaga hutchinsonii (strain ATCC 33406 / DSM 1761 / CIP 103989 / NBRC 15051 / NCIMB 9469 / D465).